We begin with the raw amino-acid sequence, 218 residues long: uncharacterized protein (218 aa).

Zn(2+) is bound by residues His-57, His-59, Asp-61, His-62, His-138, Asp-158, and His-199.

This sequence belongs to the metallo-beta-lactamase superfamily. Glyoxalase II family. Zn(2+) serves as cofactor.

This is an uncharacterized protein from Mycobacterium leprae (strain TN).